The primary structure comprises 449 residues: MMLGAEGGEGFVVKVRGLPWSCSADEVQRFFSDCKIQNGAQGIRFIYTREGRPSGEAFVELESEDEVKLALKKDRETMGHRYVEVFKSNNVEMDWVLKHTGPNSPDTANDGFVRLRGLPFGCSEEEIVQFFSGLEIVPNGITLPVDFQGRSTGEAFVQFASQEIAEKALKKHKERIGHRYIEIFKSSRAEVRTHYDPPRKLMAMQRPGPYDRPGAGRGYNSIGRGAGFERMRRGAYGGGYGGYDDYNGYNDGYGFGSDRFGRDLNYCFSGMSDHRYGDGGSTFQSTTGHCVHMRGLPYRATENDIYNFFSPLNPVRVHIETGPDGRVTGEADVEFATHEDAVAAMSKDKANMQHRYVELFLNSTAGASGGAYEHRYVELFLNSTAGASGGAYGSQMMGGMGLSNQSSYGGPASQQLSGGYGGGYGGQSSMSGYDQVLQENSSDFQSNIA.

N-acetylmethionine is present on Met-1. Residue Met-2 is modified to N-acetylmethionine; in Heterogeneous nuclear ribonucleoprotein H, N-terminally processed. Residues 11–90 (FVVKVRGLPW…RYVEVFKSNN (80 aa)) enclose the RRM 1 domain. Ser-23 carries the phosphoserine modification. Residue Lys-35 forms a Glycyl lysine isopeptide (Lys-Gly) (interchain with G-Cter in SUMO2) linkage. 2 positions are modified to phosphoserine: Ser-54 and Ser-63. Glycyl lysine isopeptide (Lys-Gly) (interchain with G-Cter in SUMO2) cross-links involve residues Lys-87 and Lys-98. The 78-residue stretch at 111-188 (GFVRLRGLPF…RYIEIFKSSR (78 aa)) folds into the RRM 2 domain. A Dimethylated arginine; alternate modification is found at Arg-233. At Arg-233 the chain carries Omega-N-methylarginine; alternate. The 1-1 repeat unit spans residues 234 to 249 (GAYGGGYGGYDDYNGY). A 2 X 16 AA Gly-rich approximate repeats region spans residues 234–433 (GAYGGGYGGY…YGGQSSMSGY (200 aa)). Tyr-246 is modified (phosphotyrosine). The 76-residue stretch at 289–364 (HCVHMRGLPY…RYVELFLNST (76 aa)) folds into the RRM 3 domain. Phosphoserine is present on Ser-310. 3 tandem repeats follow at residues 354-372 (HRYVELFLNSTAGASGGAY), 374-392 (HRYVELFLNSTAGASGGAY), and 418-433 (GGYGGGYGGQSSMSGY). A 2 X 19 AA perfect repeats region spans residues 354–392 (HRYVELFLNSTAGASGGAYEHRYVELFLNSTAGASGGAY).

Part of a ternary complex containing FUBP2, PTBP1, PTBP2 and HNRNPH1. Identified in the spliceosome C complex. Interacts with IGF2BP1. Interacts with CUGBP1; the interaction is RNA-dependent. Interacts with MBNL1; the interaction in RNA-independent.

Its subcellular location is the nucleus. The protein resides in the nucleoplasm. Its function is as follows. This protein is a component of the heterogeneous nuclear ribonucleoprotein (hnRNP) complexes which provide the substrate for the processing events that pre-mRNAs undergo before becoming functional, translatable mRNAs in the cytoplasm. Mediates pre-mRNA alternative splicing regulation. Inhibits, together with CUGBP1, insulin receptor (IR) pre-mRNA exon 11 inclusion in myoblast. Binds to the IR RNA. Binds poly(RG). The protein is Heterogeneous nuclear ribonucleoprotein H (Hnrnph1) of Rattus norvegicus (Rat).